A 411-amino-acid chain; its full sequence is uncharacterized protein (411 aa).

Positions 1–21 (MHSRILLLLLMFAFNVGLINC) are cleaved as a signal peptide. Positions 28–67 (PQSNCKIRCENGGMCVFDLERPDFHSCICLLGVYTGDRCQ) constitute an EGF-like domain. 3 disulfides stabilise this stretch: Cys-32-Cys-42, Cys-36-Cys-54, and Cys-56-Cys-66. Residues 78-97 (TATSDETSHPMNIQHQQSQA) show a composition bias toward polar residues. Disordered regions lie at residues 78 to 312 (TATS…EPIR) and 337 to 375 (HPIE…EYGM). Basic and acidic residues predominate over residues 100-230 (DDARRRDDER…VEKELNDKRT (131 aa)). Over residues 237-266 (FEYEGGDEEYPQVAEKEDEYDEGYETDNTE) the composition is skewed to acidic residues. Positions 267–276 (DVTITTTKTT) are enriched in low complexity.

This is an uncharacterized protein from Caenorhabditis elegans.